The following is a 142-amino-acid chain: Dromaiocalcin-1 (142 aa).

Cystine bridges form between cysteine 13/cysteine 24, cysteine 41/cysteine 138, and cysteine 113/cysteine 130. Positions 20–139 (FRGNCYGYFR…CGERNAFICK (120 aa)) constitute a C-type lectin domain.

It is found in the secreted. The protein resides in the extracellular space. It localises to the extracellular matrix. This Dromaius novaehollandiae (Emu) protein is Dromaiocalcin-1.